A 128-amino-acid polypeptide reads, in one-letter code: Nascent polypeptide-associated complex protein (128 aa).

One can recognise an NAC-A/B domain in the interval 8–75; sequence PRMLKKMQKM…PKKIKKEKVE (68 aa).

This sequence belongs to the NAC-alpha family. In terms of assembly, homodimer. Interacts with the ribosome. Binds ribosomal RNA.

In terms of biological role, contacts the emerging nascent chain on the ribosome. The polypeptide is Nascent polypeptide-associated complex protein (Methanocaldococcus jannaschii (strain ATCC 43067 / DSM 2661 / JAL-1 / JCM 10045 / NBRC 100440) (Methanococcus jannaschii)).